A 2515-amino-acid chain; its full sequence is Polyprotein P1234 (2515 aa).

An Alphavirus-like MT domain is found at 30–260 (VAQQATPNDH…EHRASLQSWH (231 aa)). The segment at 245–264 (GSTLYPEHRASLQSWHLPSV) is nsP1 membrane-binding. C420 carries S-palmitoyl cysteine; by host lipidation. The region spanning 695–850 (ELTNPPYHEL…RDICTKTFYK (156 aa)) is the (+)RNA virus helicase ATP-binding domain. Position 726–733 (726–733 (GTPGSGKS)) interacts with a ribonucleoside 5'-triphosphate. A (+)RNA virus helicase C-terminal domain is found at 851–999 (FISRRCTQPV…IEDWEAEHKG (149 aa)). The 330-residue stretch at 1012–1341 (NPFSCKTNVC…CVISSVYEGT (330 aa)) folds into the Peptidase C9 domain. Residues 1013-1032 (PFSCKTNVCWAKALEPILAT) form a nucleolus localization signal region. C1021 acts as the For cysteine protease nsP2 activity in catalysis. The Nuclear export signal signature appears at 1066–1075 (IKFFGMDLTS). H1098 acts as the For cysteine protease nsP2 activity in catalysis. The Nuclear localization signal signature appears at 1196 to 1200 (PHKRI). Residues 1348-1507 (APSYRTKREN…RIDAVLQLKE (160 aa)) form the Macro domain. ADP-D-ribose is bound by residues N1371, G1379, G1459, I1460, and Y1461. 4 residues coordinate Zn(2+): C1610, C1612, C1635, and C1653. Disordered regions lie at residues 1678–1705 (QPAA…DNTS) and 1777–1797 (LAAA…SSAD). 2 consecutive short sequence motifs (FGDF; binding to host G3BP1) follow at residues 1839–1842 (FGSF) and 1862–1865 (FGSF). In terms of domain architecture, RdRp catalytic spans 2269-2384 (DPVLETDIAS…HGVVSDKEMA (116 aa)).

As to quaternary structure, interacts with non-structural protein 3. Interacts with RNA-directed RNA polymerase nsP4. Interacts with protease nsP2. interacts with itself. In terms of assembly, interacts with mRNA-capping enzyme nsP1. Interacts with host DDX1. Interacts with host DDX3. Interacts (via C-terminus) with host G3BP1; this interaction inhibits the formation of host stress granules on viral mRNAs and the nsp3-G3BP1 complexes bind viral RNAs and probably orchestrate the assembly of viral replication complexes. Interacts (via C-terminus) with host G3BP2; this interaction inhibits the formation of host stress granules on viral mRNAs and the nsp3-G3BP2 complexes bind viral RNAs and probably orchestrate the assembly of viral replication complexes. Interacts with mRNA-capping enzyme nsP1. Interacts with protease nsP2. interacts with itself. As to quaternary structure, interacts with RNA-directed RNA polymerase nsP4. Interacts with mRNA-capping enzyme nsP1. Interacts with KPNA1/karyopherin-alpha1; this interaction probably allows the active transport of protease nsP2 into the host nucleus. Mg(2+) is required as a cofactor. It depends on Mn(2+) as a cofactor. In terms of processing, specific enzymatic cleavages in vivo yield mature proteins. The processing of the polyprotein is temporally regulated. In early stages (1.7 hpi), P1234 is first cleaved in trans through its nsP2 protease activity, releasing P123' and nsP4, which associate to form the early replication complex. At the same time, P1234 is also cut at the nsP1/nsP2 site early in infection but with lower efficiency. After replication of the viral minus-strand RNAs (4 hpi), the polyproteins are cut at the nsP1/nsP2 and nsP2/nsP3 sites very efficiently, preventing accumulation of P123' and P1234 and allowing the formation of the late replication complex. NsP3'/nsP4 site is not cleaved anymore and P34 is produced rather than nsP4. Post-translationally, specific enzymatic cleavages in vivo yield mature proteins. The processing of the polyprotein is temporally regulated. In early stages (1.7 hpi), P123 is cleaved at the nsP1/nsP2 site with low efficiency. After replication of the viral minus-strand RNAs (4 hpi), the polyproteins are cut at the nsP1/nsP2 and nsP2/nsP3 sites very efficiently, preventing accumulation of P123 and allowing the formation of the late replication complex. Specific enzymatic cleavages in vivo yield mature proteins. The processing of the polyprotein is temporally regulated. In early stages (1.7 hpi), P123' is cleaved at the nsP1/nsP2 site with low efficiency. After replication of the viral minus-strand RNAs (4 hpi), the polyproteins are cut at the nsP1/nsP2 and nsP2/nsP3 sites very efficiently, preventing accumulation of P123' and allowing the formation of the late replication complex. In terms of processing, palmitoylated by host palmitoyltransferases ZDHHC2 and ZDHHC19. Post-translationally, phosphorylated by host on serines and threonines. Ubiquitinated; targets the protein for rapid degradation via the ubiquitin system. Nsp4 is present in extremely low quantities due to low frequency of translation through the amber stop-codon and the degradation by the ubiquitin pathway.

Its subcellular location is the host cytoplasmic vesicle membrane. The protein resides in the host cell membrane. It localises to the host cell projection. It is found in the host filopodium. The protein localises to the host nucleus. Its subcellular location is the host cytoplasm. It carries out the reaction GTP + S-adenosyl-L-methionine = N(7)-methyl-GTP + S-adenosyl-L-homocysteine. The catalysed reaction is N(7)-methyl-GTP + L-histidyl-[protein] = N(tele)-(N(7)-methylguanosine 5'-phospho)-L-histidyl-[protein] + diphosphate. The enzyme catalyses N(tele)-(N(7)-methylguanosine 5'-phospho)-L-histidyl-[protein] + a 5'-end diphospho-(purine-ribonucleoside) in mRNA + H(+) = a 5'-end (N(7)-methyl 5'-triphosphoguanosine)-(purine-ribonucleoside) in mRNA + L-histidyl-[protein]. It catalyses the reaction a 5'-end triphospho-ribonucleoside in mRNA + H2O = a 5'-end diphospho-ribonucleoside in mRNA + phosphate + H(+). It carries out the reaction a ribonucleoside 5'-triphosphate + H2O = a ribonucleoside 5'-diphosphate + phosphate + H(+). The catalysed reaction is ATP + H2O = ADP + phosphate + H(+). The enzyme catalyses RNA(n) + a ribonucleoside 5'-triphosphate = RNA(n+1) + diphosphate. It catalyses the reaction RNA(n) + ATP = RNA(n)-3'-adenine ribonucleotide + diphosphate. It carries out the reaction 4-O-(ADP-D-ribosyl)-L-aspartyl-[protein] + H2O = L-aspartyl-[protein] + ADP-D-ribose + H(+). The catalysed reaction is 5-O-(ADP-D-ribosyl)-L-glutamyl-[protein] + H2O = L-glutamyl-[protein] + ADP-D-ribose + H(+). The enzyme catalyses ADP-alpha-D-ribose 1''-phosphate + H2O = ADP-D-ribose + phosphate. Functionally, inactive precursor of the viral replicase, which is activated by cleavages carried out by the viral protease nsP2. The early replication complex formed by the polyprotein P123 and nsP4 synthesizes minus-strand RNAs. As soon P123 is cleaved into mature proteins, the plus-strand RNAs synthesis begins. Its function is as follows. The early replication complex formed by the polyprotein P123' and nsP4 synthesizes minus-strand RNAs. Polyprotein P123' is a short-lived polyprotein that accumulates during early stage of infection. As soon P123' is cleaved into mature proteins, the plus-strand RNAs synthesis begins. In terms of biological role, cytoplasmic capping enzyme that catalyzes two virus-specific reactions: methyltransferase and nsP1 guanylyltransferase. mRNA-capping is necessary since all viral RNAs are synthesized in the cytoplasm, and host capping enzymes are restricted to the nucleus. The enzymatic reaction involves a covalent link between 7-methyl-GMP and nsP1, whereas eukaryotic capping enzymes form a covalent complex only with GMP. nsP1 capping consists in the following reactions: GTP is first methylated into 7-methyl-GMP and then is covalently linked to nsP1 to form the m7GMp-nsP1 complex from which 7-methyl-GMP complex is transferred to the mRNA to create the cap structure. NsP1 is needed for the initiation of the minus-strand RNAs synthesis. Probably serves as a membrane anchor for the replication complex composed of nsP1-nsP4. Palmitoylated nsP1 is remodeling host cell cytoskeleton, and induces filopodium-like structure formation at the surface of the host cell. Interacts with host TMEM45B; this interaction leads to viral replication inhibition. Functionally, multifunctional protein whose N-terminus is part of the RNA polymerase complex and displays NTPase, RNA triphosphatase and helicase activities. NTPase and RNA triphosphatase are involved in viral RNA capping and helicase keeps a check on the dsRNA replication intermediates. The C-terminus harbors a protease that specifically cleaves the polyproteins and releases the mature proteins. Required for the shutoff of minus-strand RNAs synthesis. Specifically inhibits the host IFN response by promoting the nuclear export of host STAT1. Also inhibits host transcription by inducing rapid proteasome-dependent degradation of POLR2A, a catalytic subunit of the RNAPII complex. The resulting inhibition of cellular protein synthesis serves to ensure maximal viral gene expression and to evade host immune response. Seems to be essential for minus-strand RNAs and subgenomic 26S mRNAs synthesis. Displays mono-ADP-ribosylhydrolase activity. ADP-ribosylation is a post-translational modification that controls various processes of the host cell and the virus probably needs to revert it for optimal viral replication. Binds proteins of FXR family and sequesters them into the viral RNA replication complexes thereby inhibiting the formation of host stress granules on viral mRNAs. The nsp3'-FXR complexes bind viral RNAs and probably orchestrate the assembly of viral replication complexes, thanks to the ability of FXR family members to self-assemble and bind DNA. Its function is as follows. Seems to be essential for minus-strand RNAs and subgenomic 26S mRNAs synthesis. Displays mono-ADP-ribosylhydrolase activity. ADP-ribosylation is a post-translantional modification that controls various processes of the host cell and the virus probably needs to revert it for optimal viral replication. Binds proteins of G3BP family and sequesters them into the viral RNA replication complexes thereby inhibiting the formation of host stress granules on viral mRNAs. The nsp3-G3BP complexes bind viral RNAs and probably orchestrate the assembly of viral replication complexes, thanks to the ability of G3BP family members to self-assemble and bind DNA. In terms of biological role, RNA dependent RNA polymerase. Replicates genomic and antigenomic RNA by recognizing replications specific signals. The early replication complex formed by the polyprotein P123 and nsP4 synthesizes minus-strand RNAs. The late replication complex composed of fully processed nsP1-nsP4 is responsible for the production of genomic and subgenomic plus-strand RNAs. The core catalytic domain of nsP4 also possesses terminal adenylyltransferase (TATase) activity that is probably involved in maintenance and repair of the poly(A) tail, an element required for replication of the viral genome. Interacts with host TMEM45B; this interaction leads to viral replication inhibition. The sequence is that of Polyprotein P1234 from Acrocephalus scirpaceus (Eurasian reed-warbler).